A 307-amino-acid polypeptide reads, in one-letter code: MKKNLFLVSVFASLFVGTANNALAYPMYAQQGYENPREATGRIVCANCHLAQKPVDIEVPQAVLPDSVFEAVVKIPYNQEVKQVLGNGKKGGLNVGAVLILPDGFTMAPADRMSAELKEKVGKLYFQPYSEDKQNILIVGPVPGKKYSEMTFPLLSPDPATNKKVNYLTYPIYLGGNRGRGQVYPDGSKSNNTVYNAAAAGKIAAINPTEKGTDVVIDKVDGGSVTVAIPSGPDLLVSVGDTVAADQPITNNPNVGGFGQGETEIVLQNPARLQGLVIFLGFVLIAQVFLVLKKKQFEKVQLSEMNF.

The signal sequence occupies residues 1–24 (MKKNLFLVSVFASLFVGTANNALA). 4 residues coordinate heme: Tyr25, Cys45, Cys48, and His49. The helical transmembrane segment at 273–293 (LQGLVIFLGFVLIAQVFLVLK) threads the bilayer.

The protein belongs to the cytochrome f family. The 4 large subunits of the cytochrome b6-f complex are cytochrome b6, subunit IV (17 kDa polypeptide, petD), cytochrome f and the Rieske protein, while the 4 small subunits are PetG, PetL, PetM and PetN. The complex functions as a dimer. Heme is required as a cofactor.

The protein resides in the plastid. It localises to the chloroplast thylakoid membrane. Functionally, component of the cytochrome b6-f complex, which mediates electron transfer between photosystem II (PSII) and photosystem I (PSI), cyclic electron flow around PSI, and state transitions. This chain is Cytochrome f, found in Ostreococcus tauri.